Here is a 635-residue protein sequence, read N- to C-terminus: Chaperone protein DnaK (635 aa).

Thr-198 is subject to Phosphothreonine; by autocatalysis. A disordered region spans residues 606–635; it reads QATAASPGAEAPKADDDVVDAEFSEVDENK. Over residues 622-635 the composition is skewed to acidic residues; the sequence is DVVDAEFSEVDENK.

Belongs to the heat shock protein 70 family.

Acts as a chaperone. The sequence is that of Chaperone protein DnaK from Novosphingobium aromaticivorans (strain ATCC 700278 / DSM 12444 / CCUG 56034 / CIP 105152 / NBRC 16084 / F199).